Consider the following 299-residue polypeptide: Phosphoribosylaminoimidazole-succinocarboxamide synthase (299 aa).

Belongs to the SAICAR synthetase family.

It catalyses the reaction 5-amino-1-(5-phospho-D-ribosyl)imidazole-4-carboxylate + L-aspartate + ATP = (2S)-2-[5-amino-1-(5-phospho-beta-D-ribosyl)imidazole-4-carboxamido]succinate + ADP + phosphate + 2 H(+). It participates in purine metabolism; IMP biosynthesis via de novo pathway; 5-amino-1-(5-phospho-D-ribosyl)imidazole-4-carboxamide from 5-amino-1-(5-phospho-D-ribosyl)imidazole-4-carboxylate: step 1/2. The sequence is that of Phosphoribosylaminoimidazole-succinocarboxamide synthase from Streptomyces coelicolor (strain ATCC BAA-471 / A3(2) / M145).